The primary structure comprises 953 residues: 26S proteasome non-ATPase regulatory subunit 1 (953 aa).

An N-acetylmethionine modification is found at M1. At T273 the chain carries Phosphothreonine. The segment at 279–318 (PGSTNTGTVPGSEKDSDSMETEEKTSSAFVGKTPEASPEP) is disordered. S290 bears the Phosphoserine mark. Positions 290-303 (SEKDSDSMETEEKT) are enriched in basic and acidic residues. Position 310 is an N6-acetyllysine (K310). At T311 the chain carries Phosphothreonine. Residue S315 is modified to Phosphoserine. PC repeat units lie at residues 403–436 (TATA…PGSA), 441–474 (GGLY…DIVR), 476–510 (GGSL…VTGE), 511–545 (AAGL…EKIL), 547–580 (GLAV…ILRR), 581–616 (SGMY…DVRR), 617–649 (AAVE…PHVR), 651–685 (GAAM…YVRQ), 686–726 (GALI…DVMA), and 729–761 (GAIL…PSVV). The residue at position 720 (K720) is an N6-acetyllysine. T830 is subject to Phosphothreonine. S834 carries the post-translational modification Phosphoserine. Disordered stretches follow at residues 839–881 (AKKK…LDNP) and 930–953 (AHGP…YIDD). 2 stretches are compositionally biased toward basic and acidic residues: residues 842–852 (KEKEKEKKEEE) and 859–872 (AEKK…KEPE). Residues 936-953 (EEEEQEPEPPEPFEYIDD) show a composition bias toward acidic residues.

It belongs to the proteasome subunit S1 family. In terms of assembly, component of the 19S proteasome regulatory particle complex. The 26S proteasome consists of a 20S core particle (CP) and two 19S regulatory subunits (RP). The regulatory particle is made of a lid composed of 9 subunits, a base containing 6 ATPases and few additional components including PSMD1. Interacts with ADRM1. Interacts with ZFAND1.

Its function is as follows. Component of the 26S proteasome, a multiprotein complex involved in the ATP-dependent degradation of ubiquitinated proteins. This complex plays a key role in the maintenance of protein homeostasis by removing misfolded or damaged proteins, which could impair cellular functions, and by removing proteins whose functions are no longer required. Therefore, the proteasome participates in numerous cellular processes, including cell cycle progression, apoptosis, or DNA damage repair. In Homo sapiens (Human), this protein is 26S proteasome non-ATPase regulatory subunit 1 (PSMD1).